The chain runs to 1036 residues: PDZ domain-containing RING finger protein 4 (1036 aa).

The RING-type; degenerate zinc-finger motif lies at 18–56 (CKLCGQVLEEPLCTPCGHVFCASCLLPWAVRRRRCPLQC). A compositionally biased stretch (gly residues) spans 129-160 (ARGGCGPTPRAGRGGGARGGPPGGRWGRGRGP). Positions 129 to 161 (ARGGCGPTPRAGRGGGARGGPPGGRWGRGRGPG) are disordered. PDZ domains are found at residues 224–314 (TIVL…LRRT) and 402–486 (EVEL…VARP). The interval 515–590 (HNEAMQPTAN…SLKSKRDLGQ (76 aa)) is disordered. Over residues 548–566 (NHEKDSGVGRTDESLRNDE) the composition is skewed to basic and acidic residues. Residues 655–689 (NQGEQEGVEHELQLLNEELRNIELECQNIMQAHRL) are a coiled coil. A compositionally biased stretch (basic and acidic residues) spans 726–735 (EHPEKSDKDS). The segment at 726-819 (EHPEKSDKDS…VLEGSKLPDQ (94 aa)) is disordered. Over residues 736–750 (SSAYNTAESCRSTPL) the composition is skewed to polar residues. Residues 774 to 799 (STMAATQSSSGQSSKESTSTKAKTTE) are compositionally biased toward low complexity. A compositionally biased stretch (basic and acidic residues) spans 805 to 819 (ESKEKVLEGSKLPDQ).

The sequence is that of PDZ domain-containing RING finger protein 4 (PDZRN4) from Homo sapiens (Human).